A 255-amino-acid polypeptide reads, in one-letter code: Ribosomal RNA small subunit methyltransferase A (255 aa).

The S-adenosyl-L-methionine site is built by Asn13, Leu15, Gly40, Glu61, Asp85, and Asn103.

This sequence belongs to the class I-like SAM-binding methyltransferase superfamily. rRNA adenine N(6)-methyltransferase family. RsmA subfamily.

It is found in the cytoplasm. It carries out the reaction adenosine(1518)/adenosine(1519) in 16S rRNA + 4 S-adenosyl-L-methionine = N(6)-dimethyladenosine(1518)/N(6)-dimethyladenosine(1519) in 16S rRNA + 4 S-adenosyl-L-homocysteine + 4 H(+). Specifically dimethylates two adjacent adenosines (A1518 and A1519) in the loop of a conserved hairpin near the 3'-end of 16S rRNA in the 30S particle. May play a critical role in biogenesis of 30S subunits. The protein is Ribosomal RNA small subunit methyltransferase A of Dechloromonas aromatica (strain RCB).